Here is a 101-residue protein sequence, read N- to C-terminus: Small ribosomal subunit protein uS14 (101 aa).

The protein belongs to the universal ribosomal protein uS14 family. Part of the 30S ribosomal subunit. Contacts proteins S3 and S10.

Its function is as follows. Binds 16S rRNA, required for the assembly of 30S particles and may also be responsible for determining the conformation of the 16S rRNA at the A site. This Vibrio campbellii (strain ATCC BAA-1116) protein is Small ribosomal subunit protein uS14.